The following is a 127-amino-acid chain: Small ribosomal subunit protein uS13 (127 aa).

The interval 100–127 (GQRTRTNARTRKGVRKTVAGKKKAPAKK) is disordered. Positions 101–127 (QRTRTNARTRKGVRKTVAGKKKAPAKK) are enriched in basic residues.

The protein belongs to the universal ribosomal protein uS13 family. In terms of assembly, part of the 30S ribosomal subunit. Forms a loose heterodimer with protein S19. Forms two bridges to the 50S subunit in the 70S ribosome.

Its function is as follows. Located at the top of the head of the 30S subunit, it contacts several helices of the 16S rRNA. In the 70S ribosome it contacts the 23S rRNA (bridge B1a) and protein L5 of the 50S subunit (bridge B1b), connecting the 2 subunits; these bridges are implicated in subunit movement. Contacts the tRNAs in the A and P-sites. The chain is Small ribosomal subunit protein uS13 from Synechococcus sp. (strain JA-3-3Ab) (Cyanobacteria bacterium Yellowstone A-Prime).